The sequence spans 528 residues: Sphingosine-1-phosphate lyase (528 aa).

Residues 13–35 (PAKLVLATAGITAASILAYQAIT) form a helical membrane-spanning segment. Lys324 carries the post-translational modification N6-(pyridoxal phosphate)lysine.

This sequence belongs to the group II decarboxylase family. Sphingosine-1-phosphate lyase subfamily. It depends on pyridoxal 5'-phosphate as a cofactor.

The protein localises to the endoplasmic reticulum membrane. The enzyme catalyses sphinganine 1-phosphate = hexadecanal + phosphoethanolamine. The protein operates within lipid metabolism; sphingolipid metabolism. Functionally, cleaves phosphorylated sphingoid bases (PSBs), such as sphingosine-1-phosphate, into fatty aldehydes and phosphoethanolamine. Sphingosine-1-phosphate (S1P) probably acts intracellularly as a second messenger perhaps by promoting cell proliferation; the absence of S1P lyase increases its concentration. This leads to increased lateral pseudopod formation as well as defects in the efficiency of chemotaxis. Overexpression of S1P lyase causes decreased growth rates, entry into stationary phase at lower cell density and increased sensitivity to the antitumor agents cisplatin and carboplatin; these effects are more pronounced in cells that express more enzyme. This chain is Sphingosine-1-phosphate lyase (sglA), found in Dictyostelium discoideum (Social amoeba).